Reading from the N-terminus, the 154-residue chain is Interleukin-2 (154 aa).

The signal sequence occupies residues 1–20 (MYKLQLLSCIALTLALVANS). Residue Thr23 is glycosylated (O-linked (GalNAc...) threonine). The cysteines at positions 78 and 126 are disulfide-linked.

It belongs to the IL-2 family.

It localises to the secreted. Cytokine produced by activated CD4-positive helper T-cells and to a lesser extend activated CD8-positive T-cells and natural killer (NK) cells that plays pivotal roles in the immune response and tolerance. Binds to a receptor complex composed of either the high-affinity trimeric IL-2R (IL2RA/CD25, IL2RB/CD122 and IL2RG/CD132) or the low-affinity dimeric IL-2R (IL2RB and IL2RG). Interaction with the receptor leads to oligomerization and conformation changes in the IL-2R subunits resulting in downstream signaling starting with phosphorylation of JAK1 and JAK3. In turn, JAK1 and JAK3 phosphorylate the receptor to form a docking site leading to the phosphorylation of several substrates including STAT5. This process leads to activation of several pathways including STAT, phosphoinositide-3-kinase/PI3K and mitogen-activated protein kinase/MAPK pathways. Functions as a T-cell growth factor and can increase NK-cell cytolytic activity as well. Promotes strong proliferation of activated B-cells and subsequently immunoglobulin production. Plays a pivotal role in regulating the adaptive immune system by controlling the survival and proliferation of regulatory T-cells, which are required for the maintenance of immune tolerance. Moreover, participates in the differentiation and homeostasis of effector T-cell subsets, including Th1, Th2, Th17 as well as memory CD8-positive T-cells. The sequence is that of Interleukin-2 (IL2) from Lama glama (Llama).